Here is a 799-residue protein sequence, read N- to C-terminus: Potassium transporter 21 (799 aa).

Topologically, residues 1–56 (MDPGVEKKKQQMELVDVESGGLPVERQDSLFREAVRAEHAGAAHWDEQDSWGRTMS) are cytoplasmic. A helical membrane pass occupies residues 57–77 (LAFQCVGILYGDIGTSSLYVY). At 78–93 (SSTFEHGIGHPDDVVG) the chain is on the extracellular side. Residues 94 to 114 (VLSLIVYSFMLFTVIKIVFVA) traverse the membrane as a helical segment. Over 115–181 (LHANDHGDGG…QLLEASKAAK (67 aa)) the chain is Cytoplasmic. A helical transmembrane segment spans residues 182 to 202 (ISLFLLTILAIAMVISDAVLT). Topologically, residues 203-219 (PPISVLSAVGGLREKVP) are extracellular. A helical membrane pass occupies residues 220 to 240 (HLTTDQIVWITVAILVVLFAI). Residues 241-251 (QRYGTDKVGYS) are Cytoplasmic-facing. Residues 252–272 (FAPIILLWLLLIGATGLYNLI) traverse the membrane as a helical segment. Topologically, residues 273 to 301 (KHDISVLRAFNPKYIIDYFRRNKKEGWVS) are extracellular. The helical transmembrane segment at 302–322 (LGSILLCFTGSEALFANLGYF) threads the bilayer. Over 323-328 (SIRSIQ) the chain is Cytoplasmic. A helical transmembrane segment spans residues 329–349 (LSFSFALLPSVLLTYIGQAAF). Residues 350–362 (LSKNPKNVANTFF) are Extracellular-facing. Residues 363 to 383 (AATPISLFWPTFIMAIAASII) form a helical membrane-spanning segment. Residues 384 to 420 (GSQAMISCAFATVSHLQSLSCFPRVKILHTSKRFPGQ) lie on the Cytoplasmic side of the membrane. Residues 421 to 441 (LYIPGVNFLLCVAACVVTVSF) form a helical membrane-spanning segment. The Extracellular segment spans residues 442-452 (KTTVIIGKAHE). The chain crosses the membrane as a helical span at residues 453–473 (ICVILVMIITTLLMTIVMLLV). Residues 474-475 (WK) are Cytoplasmic-facing. A helical membrane pass occupies residues 476–496 (INILWVALFFITFTSTEAVYL). Residues 497–508 (SSVLYKFTHGPY) are Extracellular-facing. Residues 509–529 (VPVAMSVVLMVVMIVWHYVHV) form a helical membrane-spanning segment. At 530 to 799 (KRYKYELEHT…LLKVGISYEI (270 aa)) the chain is on the cytoplasmic side.

It belongs to the HAK/KUP transporter (TC 2.A.72.3) family.

Its subcellular location is the membrane. Its function is as follows. High-affinity potassium transporter. The protein is Potassium transporter 21 (HAK21) of Oryza sativa subsp. japonica (Rice).